A 7081-amino-acid polypeptide reads, in one-letter code: MSKQYYSFKKGVGSGLEDNTFMTLWDFLESWIIQNDWVAIFFIILLGIIFEIILMKACASFWKKPTLPEKGSSDVQETEDSCPKSRKLAPENWSVINSSSGERVGTFLEKRITSSLTSEEKECNFEDRILFSREILWSGTSESEDQVSPSSESHVPSSNGISSSLPLFYSEVEETCLSHTEHPDREYETIQFSSKKLFSMMKTNKNKNSGFSSDLSFSASRFTVENEDLDVAPCPLAHLFLSRDQVRLLEENVRNQIPSKPKTKLGSRTTYQCSRSQESLNQNQPSVGMVISVQAQDSFPGQNAFQNQGLYEVQFTSQAQYINHNQESIKSQPESKASNFAQPEDVMKKPFSSSTQDSFQSQDLDRNQHFVEVPSIVEAKYSVKGLESDEHLGEDQHCVWFIDSNKVKYSIKGQDTIFKNAEFLVLTLNPNLVTEDMPQLRSVKAQGQQQIVSSELNQDSVYSSVPLLSTIKGQKNRRKTPDSKSKLSLNVPSLKAKKTPTSQVFQITVCHTLKNRNELGCKNNTEKKELHERKDISDIALHLISVSKLILPYVKNYSRKQLVKVMPGLIKCGHFLQKQNKSPDTEKINYAGPLEETGISDITKKEKEYDKENKRLKNISPKMLPQLEQSFMVNTVQLKAPCLLVETNGKSKESLKDSITQAKGIGITEFHVLNSKKPFDLHIPKHKTSLEEAISKPMQKLVSSPEMESNNRMKIQEDLQSSENSHLQLSNGEELPTSTPKTQRCFPRENTQKQKDFLELVLELSNVGLLISPGSKMHKSSEELEAIKIQVNTESVNLKESKPLILNVTEDSDLRESEELECNTGSNITNMHQDKETSDAFHSATYTTISQLPDTETHSISKAKADTLRIIRLSHSASKQEKLPDEKETQNAEYIDKSCTFKKPQQCDRKEQEKEANSELTQGFRFSIHLKQKPKYVKFQMEQISSGSSKAPNKEQEVQPQTLSTQTILENSPCPMMDPFQVEKVKQSTDRPTDRESAGDPKNPLTMPENLPVGELLIETTEYSVPFGGNLQKTTDSHIAEEKEDVKRYLPAVALGSFNNHLLTLPYFKRQEIKKKLSETKSVLSVKYVIMKVKKPAISLMPYINICGTSNHRKKMGGNFEIIIKQILQDKIAAGMLLNVIYPPMSILPNTRMYSRLNAENHSHIKLVQEESQIEREEKYPYFINEGNESQNTLDAKLQDEVKGVKETLPKAVLHDSCNLGLDAHLEKEIKTEKEMHQPIPFTETIIESVVSPIMELSHAENVKSTQKTQTDCKCTADSETPSPISGKSLIGDPLNQTRESYIPSNGSDTREMGYCFAEEKTEIPKDLPATSPETFNYCTPVLSCSKVMKKRVTFALTTSTAKPKCVNTKAVKPSISETVSVTSHRKKSELDFKTKFKKINQTKGLVPECLNTLCSPMHSRLQREFCLPASQLKQGETADKTYTDVFAKNSISHDREEKLQDGKEEEHKVLLEAAPQLSQHLGSEAGQMKEIHLESDPVLNCLTLELHINGQRLQHQTGFEQTTLETSLQMGPLEAEELQKANETENDIKVLGGPKIPPPKALQALENSDGLILNAYQKDNELVKSDEELNQPGSTNIQVQPQTHFTQTILKSTSCPTLDQFPFEKVESHVRFSPLKSGEAKVDEIIFYAREGGISSDSSHQKEQAGGTEKKETAIFGSCMPALSTPKTTRNLKQFSDMKTLVNPKCGIIKAKKPSISYMLNIRAGAGPKRRKELSCNLTTKMKELHQGKKGVDETYAFLTMTPDINKYSKVETEKDTLREKRLSSTQVKQDTSPHEDSITSRDIKETLLQDEEQEERKQEALLKVIPQHLQHFMFRSGQGKDLDFHKLENQGSRKILFVTKQDVPQQLQPAEPIQREETKKCLQTQNGTICTVNSKLLPLKSEDSVNGEVLTGAIKRGVPTDRKCMGEQHNSGKGEKAEFNKDLQATVLELQKSPHGGEAQKANLTDMESGSSNAMNMNVQHEREDKNIQKMLTESVPCYSQHLRFSTHQMKDPDPCKSGSEPKSPEGRSWNLSHIVQKTKQETHFRETVLEPISGYMMKQSPHMQEGIKCMEGLKTSFPKTGKSKIGSIPRDTPWDENPRRKWDSSISEKTAWNQKNLQTVLKPLDFSSLMSSEYESRSYTLEFIGKKSMSPKCVTLKAKQLRILQLFNIIRYSTENHRKKKQHRFKYKMKGKQWYTSIGEALLSATEYAKSTTSKSMIDKLLYNTAARCILSNRTRRQNLDGHITEEKEEVQENVAAIFLGLLDFFMPVLSDSKNQRNTAQLSEKEIIFNAKCLTMKEKKSSISQIHKINRESTRKHRKKCKSYLKTVSNRKCQENHGHITEEEEEVQENSPATFLGPLDFFMPVLSDSKNQINTIQLSERKIILNPKCLTMKEKKPPISQIHKISGQFTTKHRKKLESNLKTKLKAMWQGENVADTFPNTTSFTPDSSDIKRQSGFQTEIDMRISGLSHTQPTQIESLAEGIARYSDPIDKRRTSNLVKGAKLHDRESGEEKQEHLTEMDPFYAENFMANTYLRKDRHLGKSEDVLLGETFFSKSQIYKGNSEKNVKIEKNKNGKESLKVGLARMEKSDNCAELSEATDDAISNKYDKQNIGHSVLKENAFCNLAAIVPDSVGRHSPASEEMKRQNGRLKMADRSSPQGRPLQAKQSAVSQSPDTAGYAVVSNNKEQKQNFKAQKTEAEVDLIDQEAKINVAEEFNPESVFFSKIHPLQIENKKEFKTADWKTRADPKTFALPKKQQELCVSGTIWSYPNPYTSISPKIIRHKDKAKTADVESTMHTKQIKLKAKRITVSQLLEYGTASNKKELRGNIQQQKSFQLSKNAVHRVLKAVYDSGYCVSSIKKLTEVKMEKDKPKDRTCILPQPKLEKPLKEMQRSLSGCTDMSSILRKQEQDIREKEQKHQSISEDISQYYIGPLRISSQQINYSSFDAPRIRTDEELEFLIAQRAKEKDVGIAKHSVSIPWEREGSKRLDIPLNSKGQNIFFTELDTSQQKTCQEQELLKQEDISMTNLGSMACPIMEPLHLENTGKVTEEEDVYINRKISSHVLGKEGLKETDIFVGSKGQKFLCTNSEVQHKVPAEQKEQVNPDHVPESILDSESFLSKDPLHLKQAVNTARKENVTISESFNENLWGKEQSKLDITLKSNRQKMDFSKKLRMKHLSNYYQNKENILESVLPCILHQLYIENPKKEGSAEEIMSSKVLSPMVEKASHEVGIPVDQPPCSEGIHLNIKGRKEHPQESTHEAFPASVSHSLMDVLQIKSPKVKKALKAINSLGYLTSNTKGIGLLFPRQAEKEEKYTYKALPKPASHSKTDLFQFNASMQQEKLDAMDIPHYDYLTSQTREAVKQMDVIVGYTQNSKKRQDLLKTGQKWQYLPISYENFWEHISCPQKYPCLLQHLMPQEKEALSEGGNLSSRTPGLDLFSADQLSTITKNRLEWIVPLISPRQMKKQDSMLPLGSYHKTIKYASLLFPKGMKSSDGVQVFDLISNNSSPKLRLGKKIETQKANEKVQKEVCLPITLHSLSASMPILQESKGQKDSVEQVIRKGVICHKRRTSKWKKSVFSHILNTSDCGASSNRLEMQWNMTDKMVNVKHRMSEIDLVAAKICESILSLPHFKLNKETIDGVISSNVKSTKQHISQGKNDRVKAMDMKRIKSPNIILKPRKSSLSHILSIKEFPLLLDIIKQEGKMQEGKGKSSMKLTNLCTSLPSLSHSNSNSRTKAGKDKSGTLKGCLPPLKLQASSNARRVSSAESINRDSLSNVIESKCFPQKKKEDRENIVDVKDVMGLKCITLKGKKSLFRHLLHGKEPQRSNKKLEKMTQEDESNLNVVQNKLCASILSPPHLEWNPRIKEVYMRGITRFCLSSSTQQELSDTMEKCEQPIDDSLSSIEKAKHMPQKDKDRVEKALEKIMHSKRIALEVKQPSIFQELELNIKEKGGKIQEDKEVEIWSKPFASISFLPYSKVGTIEGEEAMRIKMRSSFSQPNLQESSDTEKTAYEKCISDNISNSVKKALESILQKEQRQKMEKIRALKKMKSSISQGIQLDIKEQEKRIEHIKGEPSVLLTNACASIPSPSHLQLDTRREKAEYVTEITRYYLPELSHQKSSEAGEKADGVASKGDITIKVQKAKDYMQQKEDDEVKISAKKDIMHPEDKGLKAKKALSQDLPLNTKEPGKMDQEAQEQGKEDREGEEQGKEDRRGAGQEKVDREDKEQGKMDHEVEEQQKADGVGIEQGKMDGDKNEQERVLFLYLPSNSSLTHYILDTRIEGEEDQQGIIRPGILQPRHQKSSETGKKANGVPSEGDSASEVQKAKDYMQQKEEDEVKISAEKDLMHPEDKDLKGKKALSQNLPLNPKEPGKRDGEGQEQGKEDGEGEEQGNRDGETEEQQQADGVGTEQEKRDGHKSKQETVLFLHLPSESSLTCYELNTRKEGEEDLQGIIKSATLQLRQQKSFDAGKIAHTKSFGVDSSNDVKTVQEYKPQKEVDRGKTVSVDYIMQPEGTIFEAEQLSLPHTLNIPGSSGSKTREVLTNIKEKLRHVQERKSELDVFLTIPSLSHCKLDKRTAGKKEEQGVTRSFLPPSWHMESSDTGKLKYTLSYLNDITGDSNRTKYMAQIQKDKANISEKSVMHPEYIAVKAEKSPLSHILKTKELQVNISQQGEKAQEGEVEIVVLLSKTCPFVTSSAFLELDSIKEEEGEPRITRSFMPHLEIQESLPSRQTAPTKPTESLVKKEKQLLPQKEDRVQTVSMHGLMHPNGAVFKAKTSAPPQVFSITEHSPLSKRKEPQWGMKERAGQKQDRTGRPHVILTKTHPFMPSLSHHRFSPSQPKLPISSGAGKSRLANSNEGISSHKVILKANQQMPYKEAKDRVKIEGREGRILPKRIHLRAEALPLALLCNGKNYSLHIEEQGEGVQESKKEPGVVPRKSASFPPPPFYLNCDTRRNEKEGTLGKTQFSFPPLKIQDSSDSGKKAYTESLHGYTLSNSKGPVQPTAQGEEKGGLRIDMEDKMLPKCTDLKAKQLLLSDILNTKKLQWKSKEQKRKIQEDKNKQVKGLPSINTSLLTPPYLKFDTTEGQENVIRIAKVSLPQSRSKESSDAGRIACPEATHGELSSDVKQLKAHLLQKEEKDREKVADMTSVLDPNKMYLKAKKSPVLHTHSFSDLQWKTREQEEEKVQKVKSGPGVMLSKSPSRSSPLHLNVNTGFQEESIPILTRPSFPLVKLQVSPDTEGGTCIRPIAGDILIYLQKGKHVSQNKEEDDVQIVSILIFPKHQEEKVQECEGEPGVVLTKSTSLPSLSQLELDKETHLGNEMLRLKRPILRRISHIGETVHRESVVGDIPKDVKNEKQHIPQKEERNQKKIIDMRGTDITLKSKKSPRSCMLHRTELHVNIGGQGRKEHEGQDKPPGMIQRKMCILFSKPLPSNLKLERATHADEERLGGKTSFVLPLMPSALPDTEKTADAEARSGDVRKGKPHRSQKENRHEVKTIDMRFRIHCQEARISPMSHILNAKELVLNINKLEKKVHKDKDEACVVLSRTFLSIPSAPPLYLDSGNKTDKDTPGITGSSCPQRTLHVPSNTQKITNRDSVEGVDKNVVKQAEQYVPRPEAEQQLTSNFMISVQQRNQPSRVRSEEDLNQLVLNSRDEDIYFTGFGTIRSGKRPEWLFTGKKAQPVKYKTETLTAFLSYPTMDATKMGGLEEDTEIMDNLNHKISPKASVSLIRKISKELYVTLGTPANSKGFSVSERYAHQQETSSKVSPELAGSCKFDKPKEDGQSNDRISKMFSPKVLAPQTKGSLKKISIVTNWNAPQNIEEQDIVMKKQVIRRCEHGHKTRTNTILSKFPLQSGKQKTPSETDVDKKTTAHLSLQMLPGIHMDMTEIDPAKGGRKQALLISEQEEGVLEFLPKSLFPPWTFQFQSGDLEEKHQTDANTNINLEQKKLEMDNDSTVNQKEGKLKIGTNRALHLQEEKTEMHKARTANLEKERGRMDTSSSAHPHLLSLKAEESQMKTQVITHRENSRLIMQKQKKELEASNAKQSIQLQKLFQRNVLDSFYSYVPLSPKRKDQKGRLTIRDLKRELSTKYLTMKIQNHPIPQMLNITGRGTPSNRKKLEYDVKLKNIASWSKDVSGIFIRSLSISIMRSPHTDPKTNLEREKRICLPKFQEKSPNTSEMSKRDTLTIVKGEQNFTNTVPQDPQPFAVDKQQMQKLPNVKSEANLRSEMNKKYLKAQTKERIVPEHDVSRIIKKPDLRIIEQEEKILKRILTPTECPSMLEDPKLPKQRDQSEPVWDMTTQKVQQQKAFPGTVPIPPQVKSSEVKIVADSTNAEHLLPICEATKAISESQVKNMIQDKVSSDKLDNIQAYKPDDLKSPPFPEGPDTISTAIYPKTQHKSLLEQFTPKEKNKLTSHLESKALEIQLNLIPEMARKSLQMFNFYPKGTISKDNSWRFYSRHKTMNFMSLEGTDTIEPNSKHKHQKDSPLASNMKTLIVDVSSDSEETITKLQSINKLENGTSAVTSASEMLLPHTLQNHSVKEKGKLLMHFSVKTLEIQMKAFPRIVRESYAMTSAHERKKPLSNCIHPGFTGPKRQNRILLLSEEKSLHQIDLDLQYKYLRFLLGLPVGSTFPKPNVLPKHSKLNTIAVCKNVNAGGQSGSLSIDTELLEQHISFKKQSPHENSSLIRKFPQPTLVCASDRDLHSPRKKDTQVLSESEFHVTPEKNKQYHVWFQERNTCESVDLRTQRNATGSAVSCETQISEDFVDIQTDIESPADLDECSCLEVSESEECVFLEANSYLSQESENILFELQTGIPLENVYKITTDLKSFYSEDSGSHCTRECRKETLIITPPSCKSHKSRKYRSSSKMKSPDWLCHSSSNTAEIQSRSSSVSFSEEKISWTTKSRTSYSSAPLTESNIKSHLAKNQGKSHRHPESQERKKARSDLFRKNSSHWDHDYSCTHSKGKRDRKKRVYDYESERLDCFQSKHKSASKPHHDDINFYSERKQNRPFFFACVPADSLEVIPKTIRWTIPPETLRKRNFRIPLVAKISSSWNIWSSSKKLLGSLSGSLTTVFHS.

The helical transmembrane segment at 37–57 (WVAIFFIILLGIIFEIILMKA) threads the bilayer. LRR repeat units lie at residues 233–256 (PCPL…VRNQ) and 420–445 (NAEF…SVKA). The segment at 717-745 (EDLQSSENSHLQLSNGEELPTSTPKTQRC) is disordered. A compositionally biased stretch (polar residues) spans 718–742 (DLQSSENSHLQLSNGEELPTSTPKT). Residues 865 to 890 (ADTLRIIRLSHSASKQEKLPDEKETQ) form an LRR 3 repeat. The disordered stretch occupies residues 943 to 1009 (QISSGSSKAP…DPKNPLTMPE (67 aa)). The segment covering 958 to 970 (VQPQTLSTQTILE) has biased composition (polar residues). Positions 981-999 (QVEKVKQSTDRPTDRESAG) are enriched in basic and acidic residues. The LRR 4 repeat unit spans residues 1050–1075 (LPAVALGSFNNHLLTLPYFKRQEIKK). 2 stretches are compositionally biased toward polar residues: residues 1274 to 1286 (KCTA…SPIS) and 1295 to 1304 (LNQTRESYIP). The tract at residues 1274–1304 (KCTADSETPSPISGKSLIGDPLNQTRESYIP) is disordered. The LRR 5 repeat unit spans residues 1501 to 1527 (NCLTLELHINGQRLQHQTGFEQTTLET). Basic and acidic residues-rich tracts occupy residues 1773 to 1784 (ETEKDTLREKRL) and 1793 to 1804 (TSPHEDSITSRD). Disordered stretches follow at residues 1773–1804 (ETEK…TSRD), 1954–1973 (KSPH…ESGS), 2008–2031 (STHQ…EGRS), and 2083–2103 (TGKS…NPRR). The span at 1964–1973 (ANLTDMESGS) shows a compositional bias: polar residues. The stretch at 2373–2397 (KNQINTIQLSERKIILNPKCLTMKE) is one LRR 6 repeat. Residues 2637–2680 (GRHSPASEEMKRQNGRLKMADRSSPQGRPLQAKQSAVSQSPDTA) are disordered. Polar residues predominate over residues 2668-2678 (AKQSAVSQSPD). 5 LRR repeats span residues 2727–2749 (SKIH…KTRA), 2832–2855 (IQQQ…VYDS), 2862–2889 (IKKL…KLEK), 3433–3458 (LSSR…RLEW), and 3630–3653 (ILSL…NVKS). The segment at 3730–3756 (SLSHSNSNSRTKAGKDKSGTLKGCLPP) is disordered. Residues 3875–3898 (MRGITRFCLSSSTQQELSDTMEKC) form an LRR 12 repeat. Disordered stretches follow at residues 4119-4260 (ELSH…DGDK), 4293-4428 (QGII…KQET), 4729-4756 (QESL…LLPQ), 4794-4817 (SPLS…QDRT), 4831-4859 (MPSL…RLAN), 4928-4955 (GVQE…YLNC), 4966-4985 (LGKT…SDSG), and 5191-5212 (QKVK…SPLH). Basic and acidic residues-rich tracts occupy residues 4121 to 4133 (SHQK…EKAD), 4147 to 4176 (KAKD…DKGL), 4192 to 4245 (EPGK…EQQK), 4329 to 4361 (QKAK…DLKG), 4375 to 4401 (EPGK…NRDG), and 4415 to 4426 (EQEKRDGHKSKQ). Polar residues predominate over residues 4731 to 4743 (SLPSRQTAPTKPT). Basic and acidic residues-rich tracts occupy residues 4746-4756 (LVKKEKQLLPQ) and 4798-4817 (KRKE…QDRT). Positions 5203-5212 (KSPSRSSPLH) are enriched in polar residues. The stretch at 5311–5336 (LSQLELDKETHLGNEMLRLKRPILRR) is one LRR 13 repeat. Residues 5467-5496 (LPDTEKTADAEARSGDVRKGKPHRSQKENR) form a disordered region. Residues 5469 to 5496 (DTEKTADAEARSGDVRKGKPHRSQKENR) show a composition bias toward basic and acidic residues. An LRR 14 repeat occupies 5522-5545 (LNAKELVLNINKLEKKVHKDKDEA). 2 disordered regions span residues 5564 to 5583 (LDSG…SSCP) and 5763 to 5792 (QQET…SNDR). Basic and acidic residues predominate over residues 5779-5792 (KFDKPKEDGQSNDR). 5 LRR repeats span residues 5901–5924 (KQAL…LFPP), 6259–6282 (PDLR…ECPS), 6419–6442 (HLES…SLQM), 6552–6575 (HFSV…SYAM), and 6613–6637 (QIDL…TFPK). 2 disordered regions span residues 6859 to 6878 (CKSH…SPDW) and 6916 to 6950 (APLT…RSDL). Residues 6860-6871 (KSHKSRKYRSSS) show a composition bias toward basic residues. Residues 6937-6950 (HPESQERKKARSDL) show a composition bias toward basic and acidic residues. The LRR 20 repeat unit spans residues 7012–7036 (NRPFFFACVPADSLEVIPKTIRWTI).

Its subcellular location is the membrane. The protein is Leucine-rich repeat transmembrane protein CCDC168 of Homo sapiens (Human).